Here is a 547-residue protein sequence, read N- to C-terminus: CDK5RAP1-like protein (547 aa).

Residues 79–194 enclose the MTTase N-terminal domain; it reads RTVCYVTYGC…LPRLVAVAAG (116 aa). Positions 88, 124, 157, 232, 236, and 239 each coordinate [4Fe-4S] cluster. The Radical SAM core domain maps to 218–475; sequence DSASKTAFIS…TTVFREEALK (258 aa). One can recognise a TRAM domain in the interval 478–543; that stretch reads QALIGSEQTV…SQTLKAQLIG (66 aa).

The protein belongs to the methylthiotransferase family. MiaB subfamily. It depends on [4Fe-4S] cluster as a cofactor.

Potential regulator of CDK5 activity. This is CDK5RAP1-like protein from Caenorhabditis elegans.